The sequence spans 444 residues: Methylenetetrahydrofolate--tRNA-(uracil-5-)-methyltransferase TrmFO (444 aa).

Residue 9-14 coordinates FAD; sequence GAGMAG.

This sequence belongs to the MnmG family. TrmFO subfamily. FAD serves as cofactor.

It is found in the cytoplasm. It catalyses the reaction uridine(54) in tRNA + (6R)-5,10-methylene-5,6,7,8-tetrahydrofolate + NADH + H(+) = 5-methyluridine(54) in tRNA + (6S)-5,6,7,8-tetrahydrofolate + NAD(+). The enzyme catalyses uridine(54) in tRNA + (6R)-5,10-methylene-5,6,7,8-tetrahydrofolate + NADPH + H(+) = 5-methyluridine(54) in tRNA + (6S)-5,6,7,8-tetrahydrofolate + NADP(+). Catalyzes the folate-dependent formation of 5-methyl-uridine at position 54 (M-5-U54) in all tRNAs. This Cereibacter sphaeroides (strain ATCC 17029 / ATH 2.4.9) (Rhodobacter sphaeroides) protein is Methylenetetrahydrofolate--tRNA-(uracil-5-)-methyltransferase TrmFO.